The sequence spans 305 residues: Phosphoribosylaminoimidazole-succinocarboxamide synthase (305 aa).

Belongs to the SAICAR synthetase family.

The catalysed reaction is 5-amino-1-(5-phospho-D-ribosyl)imidazole-4-carboxylate + L-aspartate + ATP = (2S)-2-[5-amino-1-(5-phospho-beta-D-ribosyl)imidazole-4-carboxamido]succinate + ADP + phosphate + 2 H(+). Its pathway is purine metabolism; IMP biosynthesis via de novo pathway; 5-amino-1-(5-phospho-D-ribosyl)imidazole-4-carboxamide from 5-amino-1-(5-phospho-D-ribosyl)imidazole-4-carboxylate: step 1/2. This chain is Phosphoribosylaminoimidazole-succinocarboxamide synthase, found in Tropheryma whipplei (strain TW08/27) (Whipple's bacillus).